A 481-amino-acid chain; its full sequence is Bifunctional protein GlmU (481 aa).

The segment at 1-235 is pyrophosphorylase; that stretch reads MTHKERPLDV…PDEVMGANDR (235 aa). Residues 13 to 16, Lys27, Gln78, 83 to 84, 107 to 109, Gly146, Glu161, Asn176, and Asn233 contribute to the UDP-N-acetyl-alpha-D-glucosamine site; these read LAAG, GT, and YGD. Residue Asp109 participates in Mg(2+) binding. Residue Asn233 participates in Mg(2+) binding. The linker stretch occupies residues 236–256; sequence VQLAQAAAVLRRRINTAHMQA. An N-acetyltransferase region spans residues 257 to 481; that stretch reads GVTLQDPSTI…PWLAGWLERQ (225 aa). Arg339 and Lys357 together coordinate UDP-N-acetyl-alpha-D-glucosamine. His369 (proton acceptor) is an active-site residue. UDP-N-acetyl-alpha-D-glucosamine contacts are provided by Tyr372 and Asn383. The acetyl-CoA site is built by Ala386, Ser411, Ala429, and Arg446.

In the N-terminal section; belongs to the N-acetylglucosamine-1-phosphate uridyltransferase family. This sequence in the C-terminal section; belongs to the transferase hexapeptide repeat family. As to quaternary structure, homotrimer. Requires Mg(2+) as cofactor.

Its subcellular location is the cytoplasm. The enzyme catalyses alpha-D-glucosamine 1-phosphate + acetyl-CoA = N-acetyl-alpha-D-glucosamine 1-phosphate + CoA + H(+). It carries out the reaction N-acetyl-alpha-D-glucosamine 1-phosphate + UTP + H(+) = UDP-N-acetyl-alpha-D-glucosamine + diphosphate. It participates in nucleotide-sugar biosynthesis; UDP-N-acetyl-alpha-D-glucosamine biosynthesis; N-acetyl-alpha-D-glucosamine 1-phosphate from alpha-D-glucosamine 6-phosphate (route II): step 2/2. The protein operates within nucleotide-sugar biosynthesis; UDP-N-acetyl-alpha-D-glucosamine biosynthesis; UDP-N-acetyl-alpha-D-glucosamine from N-acetyl-alpha-D-glucosamine 1-phosphate: step 1/1. It functions in the pathway bacterial outer membrane biogenesis; LPS lipid A biosynthesis. Functionally, catalyzes the last two sequential reactions in the de novo biosynthetic pathway for UDP-N-acetylglucosamine (UDP-GlcNAc). The C-terminal domain catalyzes the transfer of acetyl group from acetyl coenzyme A to glucosamine-1-phosphate (GlcN-1-P) to produce N-acetylglucosamine-1-phosphate (GlcNAc-1-P), which is converted into UDP-GlcNAc by the transfer of uridine 5-monophosphate (from uridine 5-triphosphate), a reaction catalyzed by the N-terminal domain. The protein is Bifunctional protein GlmU of Deinococcus geothermalis (strain DSM 11300 / CIP 105573 / AG-3a).